A 257-amino-acid polypeptide reads, in one-letter code: Glutamate racemase (257 aa).

Substrate-binding positions include 12-13 (DS) and 44-45 (YG). Cysteine 75 (proton donor/acceptor) is an active-site residue. 76 to 77 (NT) contacts substrate. Cysteine 185 functions as the Proton donor/acceptor in the catalytic mechanism. Substrate is bound at residue 186-187 (TH).

It belongs to the aspartate/glutamate racemases family.

It carries out the reaction L-glutamate = D-glutamate. It functions in the pathway cell wall biogenesis; peptidoglycan biosynthesis. In terms of biological role, provides the (R)-glutamate required for cell wall biosynthesis. The protein is Glutamate racemase of Clostridium botulinum (strain ATCC 19397 / Type A).